Consider the following 331-residue polypeptide: Aromatic 2-oxoacid reductase (331 aa).

NAD(+) is bound by residues R154–I155, D175, A205–P206, N211, A232–R234, and D258. The active site involves R234. E263 is a catalytic residue. Residue H295 is the Proton donor of the active site.

It belongs to the D-isomer specific 2-hydroxyacid dehydrogenase family.

The catalysed reaction is (R)-3-phenyllactate + NAD(+) = 3-phenylpyruvate + NADH + H(+). The enzyme catalyses (2R)-2-hydroxy-3-(4-hydroxyphenyl)propanoate + NAD(+) = 3-(4-hydroxyphenyl)pyruvate + NADH + H(+). It carries out the reaction 3-(indol-3-yl)lactate + NAD(+) = indole-3-pyruvate + NADH + H(+). The protein operates within amino-acid degradation. Essential for the reductive metabolism of L-phenylalanine, L-tyrosine and L-tryptophan. Catalyzes the conversion of phenylpyruvic acid to phenyllactic acid, 4-hydroxy-phenylpyruvic acid to 4-hydroxy-phenyllactic acid, and indolepyruvic acid to indolelactic acid. This is Aromatic 2-oxoacid reductase from Clostridium sporogenes (strain ATCC 7955 / DSM 767 / NBRC 16411 / NCIMB 8053 / NCTC 8594 / PA 3679).